The chain runs to 272 residues: Phosphate import ATP-binding protein PstB (272 aa).

One can recognise an ABC transporter domain in the interval 26–267; that stretch reads LDIKNLDLYY…PSEKQTEDYI (242 aa). 58-65 provides a ligand contact to ATP; sequence GPSGCGKS.

This sequence belongs to the ABC transporter superfamily. Phosphate importer (TC 3.A.1.7) family. In terms of assembly, the complex is composed of two ATP-binding proteins (PstB), two transmembrane proteins (PstC and PstA) and a solute-binding protein (PstS).

Its subcellular location is the cell inner membrane. It carries out the reaction phosphate(out) + ATP + H2O = ADP + 2 phosphate(in) + H(+). Functionally, part of the ABC transporter complex PstSACB involved in phosphate import. Responsible for energy coupling to the transport system. In Idiomarina loihiensis (strain ATCC BAA-735 / DSM 15497 / L2-TR), this protein is Phosphate import ATP-binding protein PstB.